The primary structure comprises 778 residues: Endonuclease MutS2 (778 aa).

ATP is bound at residue 332–339 (GPNTGGKT). Positions 703 to 778 (IDLRGKMVDE…GLGCTVVTLK (76 aa)) constitute a Smr domain.

The protein belongs to the DNA mismatch repair MutS family. MutS2 subfamily. As to quaternary structure, homodimer. Binds to stalled ribosomes, contacting rRNA.

Functionally, endonuclease that is involved in the suppression of homologous recombination and thus may have a key role in the control of bacterial genetic diversity. In terms of biological role, acts as a ribosome collision sensor, splitting the ribosome into its 2 subunits. Detects stalled/collided 70S ribosomes which it binds and splits by an ATP-hydrolysis driven conformational change. Acts upstream of the ribosome quality control system (RQC), a ribosome-associated complex that mediates the extraction of incompletely synthesized nascent chains from stalled ribosomes and their subsequent degradation. Probably generates substrates for RQC. The sequence is that of Endonuclease MutS2 from Fusobacterium nucleatum subsp. nucleatum (strain ATCC 25586 / DSM 15643 / BCRC 10681 / CIP 101130 / JCM 8532 / KCTC 2640 / LMG 13131 / VPI 4355).